A 353-amino-acid chain; its full sequence is ATP-dependent kinase YFH7 (353 aa).

ATP is bound at residue Gly31 to Thr39.

It belongs to the YFH7 family.

Its function is as follows. ATP-dependent kinase that could be involved in endoplasmic reticulum membrane assembly. The chain is ATP-dependent kinase YFH7 (YFH7) from Saccharomyces cerevisiae (strain RM11-1a) (Baker's yeast).